The following is a 279-amino-acid chain: Pantothenate synthetase (279 aa).

Residue 26–33 (MGNLHEGH) coordinates ATP. His-33 functions as the Proton donor in the catalytic mechanism. Gln-57 contributes to the (R)-pantoate binding site. Residue Gln-57 coordinates beta-alanine. 144 to 147 (GKKD) lines the ATP pocket. Gln-150 is a (R)-pantoate binding site. Residues Val-173 and 181–184 (LSSR) each bind ATP.

Belongs to the pantothenate synthetase family. As to quaternary structure, homodimer.

The protein resides in the cytoplasm. The enzyme catalyses (R)-pantoate + beta-alanine + ATP = (R)-pantothenate + AMP + diphosphate + H(+). It functions in the pathway cofactor biosynthesis; (R)-pantothenate biosynthesis; (R)-pantothenate from (R)-pantoate and beta-alanine: step 1/1. Its function is as follows. Catalyzes the condensation of pantoate with beta-alanine in an ATP-dependent reaction via a pantoyl-adenylate intermediate. This chain is Pantothenate synthetase, found in Burkholderia cenocepacia (strain ATCC BAA-245 / DSM 16553 / LMG 16656 / NCTC 13227 / J2315 / CF5610) (Burkholderia cepacia (strain J2315)).